A 207-amino-acid polypeptide reads, in one-letter code: ATP synthase subunit b (207 aa).

The N-terminal stretch at Met-1 to Ser-27 is a signal peptide. The N-palmitoyl cysteine moiety is linked to residue Cys-28. Cys-28 carries the S-diacylglycerol cysteine lipid modification. The chain crosses the membrane as a helical span at residues Trp-49–Phe-69.

The protein belongs to the ATPase B chain family. F-type ATPases have 2 components, F(1) - the catalytic core - and F(0) - the membrane proton channel. F(1) has five subunits: alpha(3), beta(3), gamma(1), delta(1), epsilon(1). F(0) has three main subunits: a(1), b(2) and c(10-14). The alpha and beta chains form an alternating ring which encloses part of the gamma chain. F(1) is attached to F(0) by a central stalk formed by the gamma and epsilon chains, while a peripheral stalk is formed by the delta and b chains.

Its subcellular location is the cell membrane. Its function is as follows. F(1)F(0) ATP synthase produces ATP from ADP in the presence of a proton or sodium gradient. F-type ATPases consist of two structural domains, F(1) containing the extramembraneous catalytic core and F(0) containing the membrane proton channel, linked together by a central stalk and a peripheral stalk. During catalysis, ATP synthesis in the catalytic domain of F(1) is coupled via a rotary mechanism of the central stalk subunits to proton translocation. In terms of biological role, component of the F(0) channel, it forms part of the peripheral stalk, linking F(1) to F(0). The sequence is that of ATP synthase subunit b from Mycoplasma pneumoniae (strain ATCC 29342 / M129 / Subtype 1) (Mycoplasmoides pneumoniae).